Consider the following 382-residue polypeptide: Intermediate transcription factor 3 large subunit (382 aa).

Belongs to the poxviruses A23 family. In terms of assembly, heterodimer of a 45 kDa and a 32 kDa subunit.

Its function is as follows. Acts with RNA polymerase to initiate transcription from intermediate gene promoters. This chain is Intermediate transcription factor 3 large subunit (VITF3L), found in Monkeypox virus (strain Zaire-96-I-16) (MPX).